The following is a 167-amino-acid chain: Large ribosomal subunit protein uL15 (167 aa).

A compositionally biased stretch (polar residues) spans 1-10 (MKLNQISDNP). Residues 1–37 (MKLNQISDNPGATKDRMRVGRGIGSGKGKTAGRGVKG) form a disordered region. Over residues 21–35 (RGIGSGKGKTAGRGV) the composition is skewed to gly residues.

It belongs to the universal ribosomal protein uL15 family. Part of the 50S ribosomal subunit.

Functionally, binds to the 23S rRNA. The polypeptide is Large ribosomal subunit protein uL15 (Methylobacterium radiotolerans (strain ATCC 27329 / DSM 1819 / JCM 2831 / NBRC 15690 / NCIMB 10815 / 0-1)).